We begin with the raw amino-acid sequence, 211 residues long: Pyridoxine/pyridoxamine 5'-phosphate oxidase (211 aa).

Residues 7–10 (RREY) and Lys65 each bind substrate. FMN-binding positions include 60 to 65 (RIVLLK), 75 to 76 (YT), Arg81, Lys82, and Gln104. Residues Tyr122, Arg126, and Ser130 each contribute to the substrate site. Residues 139–140 (QS) and Trp184 contribute to the FMN site. 190-192 (RLH) lines the substrate pocket. Arg194 contributes to the FMN binding site.

This sequence belongs to the pyridoxamine 5'-phosphate oxidase family. Homodimer. It depends on FMN as a cofactor.

It catalyses the reaction pyridoxamine 5'-phosphate + O2 + H2O = pyridoxal 5'-phosphate + H2O2 + NH4(+). The enzyme catalyses pyridoxine 5'-phosphate + O2 = pyridoxal 5'-phosphate + H2O2. Its pathway is cofactor metabolism; pyridoxal 5'-phosphate salvage; pyridoxal 5'-phosphate from pyridoxamine 5'-phosphate: step 1/1. It participates in cofactor metabolism; pyridoxal 5'-phosphate salvage; pyridoxal 5'-phosphate from pyridoxine 5'-phosphate: step 1/1. In terms of biological role, catalyzes the oxidation of either pyridoxine 5'-phosphate (PNP) or pyridoxamine 5'-phosphate (PMP) into pyridoxal 5'-phosphate (PLP). This is Pyridoxine/pyridoxamine 5'-phosphate oxidase from Vibrio cholerae serotype O1 (strain ATCC 39315 / El Tor Inaba N16961).